A 639-amino-acid polypeptide reads, in one-letter code: Signal recognition particle receptor subunit alpha (639 aa).

Positions 132-317 (APTTMKKFED…STKPSATKGT (186 aa)) are disordered. Basic and acidic residues-rich tracts occupy residues 137–146 (KKFEDSEKAK) and 153–165 (IETR…EKAK). Ser178 bears the Phosphoserine mark. Basic and acidic residues predominate over residues 204–240 (ELSKEEQIRRKREEFIQKHGRGMEKSSKSSKSDAPKE). Phosphothreonine is present on Thr285. 3 positions are modified to phosphoserine: Ser297, Ser298, and Ser299. Positions 305–315 (AQNSTKPSATK) are enriched in polar residues. Positions 420 to 637 (YVVTFCGVNG…NAKAVVAALM (218 aa)) are NG domain. 426 to 433 (GVNGVGKS) serves as a coordination point for GTP. Ser474 carries the phosphoserine modification. GTP is bound at residue 521–525 (DTAGR). Thr579 carries the phosphothreonine modification. A GTP-binding site is contributed by 589–592 (TKFD).

The protein belongs to the GTP-binding SRP family. In terms of assembly, heterodimer with SRPRB. Interacts with the signal recognition particle (SRP) complex subunit SRP54.

The protein resides in the endoplasmic reticulum membrane. Its function is as follows. Component of the SRP (signal recognition particle) receptor. Ensures, in conjunction with the signal recognition particle, the correct targeting of the nascent secretory proteins to the endoplasmic reticulum membrane system. Forms a guanosine 5'-triphosphate (GTP)-dependent complex with the SRP subunit SRP54. SRP receptor compaction and GTPase rearrangement drive SRP-mediated cotranslational protein translocation into the ER. In Bos taurus (Bovine), this protein is Signal recognition particle receptor subunit alpha.